A 146-amino-acid chain; its full sequence is VHWTAEEKQLITGLWGKVNVADCGAEALARLLIVYPWTQRFFASFGNLSSPTAILGNPMVRAHGKKVLTSFGDAVKNLDNIKNTFAQLSELHCDKLHVDPENFRLLGDILIIVLAAHFPKEFTPECQAAWQKLVRVVAHALARKYH.

One can recognise a Globin domain in the interval 2 to 146 (HWTAEEKQLI…VAHALARKYH (145 aa)). Heme b-binding residues include His63 and His92.

The protein belongs to the globin family. Heterotetramer of two alpha chains and two beta chains. In terms of tissue distribution, red blood cells.

Functionally, involved in oxygen transport from the lung to the various peripheral tissues. In Anas platyrhynchos platyrhynchos (Northern mallard), this protein is Hemoglobin subunit beta (HBB).